The following is a 77-amino-acid chain: Translation initiation factor IF-1, chloroplastic (77 aa).

The 71-residue stretch at 1 to 71 (MKEQKLIHEG…TKGRIIYRLR (71 aa)) folds into the S1-like domain.

This sequence belongs to the IF-1 family. As to quaternary structure, component of the 30S ribosomal translation pre-initiation complex which assembles on the 30S ribosome in the order IF-2 and IF-3, IF-1 and N-formylmethionyl-tRNA(fMet); mRNA recruitment can occur at any time during PIC assembly.

Its subcellular location is the plastid. The protein resides in the chloroplast. Functionally, one of the essential components for the initiation of protein synthesis. Stabilizes the binding of IF-2 and IF-3 on the 30S subunit to which N-formylmethionyl-tRNA(fMet) subsequently binds. Helps modulate mRNA selection, yielding the 30S pre-initiation complex (PIC). Upon addition of the 50S ribosomal subunit IF-1, IF-2 and IF-3 are released leaving the mature 70S translation initiation complex. The protein is Translation initiation factor IF-1, chloroplastic of Drimys granadensis.